The sequence spans 270 residues: Putative pyruvate, phosphate dikinase regulatory protein (270 aa).

Position 153–160 (153–160 (GVSRTSKT)) interacts with ADP.

It belongs to the pyruvate, phosphate/water dikinase regulatory protein family. PDRP subfamily.

It carries out the reaction N(tele)-phospho-L-histidyl/L-threonyl-[pyruvate, phosphate dikinase] + ADP = N(tele)-phospho-L-histidyl/O-phospho-L-threonyl-[pyruvate, phosphate dikinase] + AMP + H(+). The catalysed reaction is N(tele)-phospho-L-histidyl/O-phospho-L-threonyl-[pyruvate, phosphate dikinase] + phosphate + H(+) = N(tele)-phospho-L-histidyl/L-threonyl-[pyruvate, phosphate dikinase] + diphosphate. Functionally, bifunctional serine/threonine kinase and phosphorylase involved in the regulation of the pyruvate, phosphate dikinase (PPDK) by catalyzing its phosphorylation/dephosphorylation. This is Putative pyruvate, phosphate dikinase regulatory protein from Halalkalibacterium halodurans (strain ATCC BAA-125 / DSM 18197 / FERM 7344 / JCM 9153 / C-125) (Bacillus halodurans).